A 208-amino-acid chain; its full sequence is High frequency lysogenization protein HflD homolog (208 aa).

Belongs to the HflD family.

Its subcellular location is the cytoplasm. The protein localises to the cell inner membrane. The sequence is that of High frequency lysogenization protein HflD homolog from Edwardsiella ictaluri (strain 93-146).